The sequence spans 88 residues: Small ribosomal subunit protein bS20 (88 aa).

The tract at residues Met-1 to Met-28 is disordered.

Its function is as follows. Binds directly to 16S ribosomal RNA. The sequence is that of Small ribosomal subunit protein bS20 from Rhodopseudomonas palustris (strain ATCC BAA-98 / CGA009).